Consider the following 490-residue polypeptide: Apocarotenoid-15,15'-oxygenase (490 aa).

Fe cation is bound at residue H183. S206 contacts substrate. H238 contributes to the Fe cation binding site. F303 contributes to the substrate binding site. The Fe cation site is built by H304 and H484.

Belongs to the carotenoid oxygenase family. Fe(2+) is required as a cofactor.

It carries out the reaction all-trans-8'-apo-beta-carotenal + O2 = (2E,4E,6E)-2,6-dimethylocta-2,4,6-trienedial + all-trans-retinal. Cleaves a number of carotenals and carotenols in the all-trans configuration at the 15-15' double bond producing retinal or retinol, respectively. Also shows activity toward lycopenals and the corresponding alcohols. Does not cleave beta-carotene or lycopene. The polypeptide is Apocarotenoid-15,15'-oxygenase (Synechocystis sp. (strain ATCC 27184 / PCC 6803 / Kazusa)).